The primary structure comprises 513 residues: 5-aminolevulinate synthase, erythroid-specific, mitochondrial (513 aa).

The N-terminal 18 residues, 1 to 18, are a transit peptide targeting the mitochondrion; that stretch reads MAAFLRCPLLARHPPLAR. Arg-98 provides a ligand contact to succinyl-CoA. Cys-190 and Phe-191 together coordinate pyridoxal 5'-phosphate. Succinyl-CoA-binding residues include Ser-212 and Lys-231. 3 residues coordinate pyridoxal 5'-phosphate: Ser-264, His-292, and Thr-320. Lys-323 is a catalytic residue. Lys-323 carries the post-translational modification N6-(pyridoxal phosphate)lysine. Pyridoxal 5'-phosphate is bound by residues Thr-352 and Thr-353. Succinyl-CoA is bound at residue Thr-437.

It belongs to the class-II pyridoxal-phosphate-dependent aminotransferase family. In terms of assembly, homodimer. Pyridoxal 5'-phosphate is required as a cofactor. In terms of tissue distribution, erythroid-specific.

The protein localises to the mitochondrion inner membrane. The catalysed reaction is succinyl-CoA + glycine + H(+) = 5-aminolevulinate + CO2 + CoA. Its pathway is porphyrin-containing compound metabolism; protoporphyrin-IX biosynthesis; 5-aminolevulinate from glycine: step 1/1. Catalyzes the pyridoxal 5'-phosphate (PLP)-dependent condensation of succinyl-CoA and glycine to form aminolevulinic acid (ALA), with CoA and CO2 as by-products. Contributes significantly to heme formation during erythropoiesis. In Gallus gallus (Chicken), this protein is 5-aminolevulinate synthase, erythroid-specific, mitochondrial (ALAS2).